We begin with the raw amino-acid sequence, 83 residues long: Small ribosomal subunit protein bS18 (83 aa).

Belongs to the bacterial ribosomal protein bS18 family. Part of the 30S ribosomal subunit. Forms a tight heterodimer with protein bS6.

In terms of biological role, binds as a heterodimer with protein bS6 to the central domain of the 16S rRNA, where it helps stabilize the platform of the 30S subunit. This is Small ribosomal subunit protein bS18 from Cytophaga hutchinsonii (strain ATCC 33406 / DSM 1761 / CIP 103989 / NBRC 15051 / NCIMB 9469 / D465).